Consider the following 492-residue polypeptide: Stage IV sporulation protein A (492 aa).

Residues 24–31 carry the Walker A motif; involved in ATP-binding motif; that stretch reads GAVRTGKS. ATP is bound at residue 24–31; that stretch reads GAVRTGKS.

Its subcellular location is the cytoplasm. It catalyses the reaction ATP + H2O = ADP + phosphate + H(+). In terms of biological role, ATPase. Has a role at an early stage in the morphogenesis of the spore coat outer layers. Directs the assembly of the coat and exosporium to an area around the forespore. This is Stage IV sporulation protein A from Bacillus anthracis.